Consider the following 317-residue polypeptide: MAQNNEQQQQGQGLIEAGVLDDIINRLLEFRNARTVRQVQLSEAEIRSLCSASREIFLQQPNLLDLKPPIKICGDIHGQYGDLLRLFEYGGFPPEANYLFLGDYVDRGKQSLETICLLLAYKIKYPENFFLLRGNHECASINRIYGFYDECKRRFNVKLWKCFTECFNCLPVAALIDEKILCMHGGLSPVLTNLDQIRNLPRPTDVPDSGLLCDLLWSDPSREVKGWGMNDRGVSYTFGPDKVAEFLMQHDMDLVCRAHQVVEDGYEFFAERQLVTIFSAPNYCGEFDNAGAMMSVDESLMCSFQILKPTDRKPRFL.

Mn(2+)-binding residues include aspartate 75, histidine 77, aspartate 103, and asparagine 135. The active-site Proton donor is the histidine 136. Positions 184 and 259 each coordinate Mn(2+).

The protein belongs to the PPP phosphatase family. PP-1 subfamily. Requires Mn(2+) as cofactor.

It catalyses the reaction O-phospho-L-seryl-[protein] + H2O = L-seryl-[protein] + phosphate. It carries out the reaction O-phospho-L-threonyl-[protein] + H2O = L-threonyl-[protein] + phosphate. This chain is Serine/threonine-protein phosphatase PP1 isozyme 1 (NPP1), found in Nicotiana tabacum (Common tobacco).